An 82-amino-acid chain; its full sequence is Large ribosomal subunit protein bL27 (82 aa).

Residues 1–21 form a disordered region; sequence MAHKKGASSSRNGRDSNAKRL.

Belongs to the bacterial ribosomal protein bL27 family.

In Tropheryma whipplei (strain TW08/27) (Whipple's bacillus), this protein is Large ribosomal subunit protein bL27.